The primary structure comprises 233 residues: Small ribosomal subunit protein uS5 (233 aa).

2 stretches are compositionally biased toward basic and acidic residues: residues methionine 1–asparagine 12 and arginine 39–glutamate 54. The disordered stretch occupies residues methionine 1–glutamate 54. An S5 DRBM domain is found at leucine 59–valine 122.

Belongs to the universal ribosomal protein uS5 family. As to quaternary structure, part of the 30S ribosomal subunit. Contacts proteins S4 and S8.

With S4 and S12 plays an important role in translational accuracy. In terms of biological role, located at the back of the 30S subunit body where it stabilizes the conformation of the head with respect to the body. This Zymomonas mobilis subsp. mobilis (strain ATCC 31821 / ZM4 / CP4) protein is Small ribosomal subunit protein uS5.